The primary structure comprises 765 residues: Probable ATP-dependent RNA helicase DDX27 (765 aa).

Residues serine 23, serine 25, and serine 48 each carry the phosphoserine modification. The span at 43–63 shows a compositional bias: acidic residues; the sequence is LGKNRSADFNPDFVFTEKEGT. Disordered stretches follow at residues 43 to 83 and 111 to 179; these read LGKN…KRAA and KEKE…FFED. Residues 55 to 57 carry the Required for interaction with the PEBOW complex motif; the sequence is FVF. Basic and acidic residues predominate over residues 129–156; it reads ENDEEGSEDEASETDYSSADENILTKAD. A phosphoserine mark is found at serine 135 and serine 146. Over residues 157–172 the composition is skewed to acidic residues; that stretch reads TLKVKDRKKKKKKGQE. The Nuclear localization signal signature appears at 164 to 169; the sequence is KKKKKK. A Q motif motif is present at residues 187–215; sequence LSFQDMNLSRPLLKAITAMGFKQPTPIQK. Residues 218–392 enclose the Helicase ATP-binding domain; sequence IPVGLLGKDI…SVSLKNPVRI (175 aa). An ATP-binding site is contributed by 231–238; it reads AATGTGKT. A DEAD box motif is present at residues 340-343; that stretch reads DEAD. In terms of domain architecture, Helicase C-terminal spans 426–572; the sequence is LLTRTFTDHV…DVILKFRDKI (147 aa). Over residues 716–725 the composition is skewed to basic residues; sequence VFDEELTNTS.

It belongs to the DEAD box helicase family. DDX27/DRS1 subfamily. As to quaternary structure, associates with PeBoW complex, composed of BOP1, PES1 and WDR12. Interacts directly with BOP1 and PES1.

It is found in the nucleus. The protein resides in the nucleolus. It localises to the chromosome. It carries out the reaction ATP + H2O = ADP + phosphate + H(+). In terms of biological role, probable ATP-dependent RNA helicase. Component of the nucleolar ribosomal RNA (rRNA) processing machinery that regulates 3' end formation of ribosomal 47S rRNA. This Homo sapiens (Human) protein is Probable ATP-dependent RNA helicase DDX27 (DDX27).